The chain runs to 221 residues: GTP cyclohydrolase III (221 aa).

It belongs to the archaeal-type GTP cyclohydrolase family.

The enzyme catalyses GTP + 3 H2O = 2-amino-5-formylamino-6-(5-phospho-D-ribosylamino)pyrimidin-4(3H)-one + 2 phosphate + 2 H(+). Its function is as follows. Catalyzes the formation of 2-amino-5-formylamino-6-ribofuranosylamino-4(3H)-pyrimidinone ribonucleotide monophosphate and inorganic phosphate from GTP. Also has an independent pyrophosphate phosphohydrolase activity. This is GTP cyclohydrolase III from Pyrobaculum neutrophilum (strain DSM 2338 / JCM 9278 / NBRC 100436 / V24Sta) (Thermoproteus neutrophilus).